A 343-amino-acid chain; its full sequence is Protein rax1 (343 aa).

At 1-235 (MASAPRVSEV…NLNPLTCTGR (235 aa)) the chain is on the cytoplasmic side. The RGS domain occupies 109-228 (ELSNEQTINS…LNHKFKHNLN (120 aa)). A helical transmembrane segment spans residues 236 to 256 (FIIGYVSTFAAYWLGFCGIFL). Residues 257 to 263 (DYSRRKR) are Extracellular-facing. The chain crosses the membrane as a helical span at residues 264 to 284 (VWTLLPFAFGFYNLICTWSKH). The Cytoplasmic portion of the chain corresponds to 285–317 (DPVLALLGYSEVKPFHYEKVLQPSIRLSLNRRA). Residues 318–338 (IFVLSIIVLIVGANTAIFSCV) form a helical membrane-spanning segment. Residues 339-343 (PSIRL) lie on the Extracellular side of the membrane.

Its subcellular location is the cell membrane. It localises to the endoplasmic reticulum membrane. In terms of biological role, may be involved in cell polarization and division. The protein is Protein rax1 (rax1) of Schizosaccharomyces pombe (strain 972 / ATCC 24843) (Fission yeast).